Here is a 372-residue protein sequence, read N- to C-terminus: Gustatory and pheromone receptor 39a, isoform B (372 aa).

Topologically, residues 1–32 are cytoplasmic; the sequence is MGTRNRKLLFFLHYQRYLGLTNLDFSKSLHIY. The helical transmembrane segment at 33-53 threads the bilayer; it reads WLHGTWSSTAIQIVVVGVFMA. Topologically, residues 54–59 are extracellular; sequence ALLGAL. A helical membrane pass occupies residues 60–80; sequence AESLYYMETKSQTGNTFDNAV. Residues 81–122 lie on the Cytoplasmic side of the membrane; that stretch reads ILTTSVTQLLANLWLRSQQKSQVNLLQRLSQVVELLQFEPYA. Residues 123-143 form a helical membrane-spanning segment; the sequence is VPQFRWLYRIWLLVCLIYGAM. At 144 to 147 the chain is on the extracellular side; that stretch reads VTHF. The chain crosses the membrane as a helical span at residues 148–168; it reads GINWLTTMQISRVLTLIGFVY. The Cytoplasmic portion of the chain corresponds to 169-224; that stretch reads RCVLANFQFTCYTGMVVILKKLLQVQVKQLEHLVSTTTISMAGVAGCLRTHDEILL. Residues 225-245 form a helical membrane-spanning segment; the sequence is LGQRELIAVYGGVILFLFIYQ. Residues 246 to 265 are Extracellular-facing; it reads VMQCILIFYISNLEGFHSSN. The helical transmembrane segment at 266 to 286 threads the bilayer; it reads DLVLIFCWLAPMLFYLILPLV. The Cytoplasmic portion of the chain corresponds to 287-348; sequence VNDIHNQANK…KSTLFKLFTA (62 aa). A helical membrane pass occupies residues 349–368; it reads IFTYMVILVQFKEMENSTKS. Ile-369 is a topological domain (extracellular).

The protein belongs to the insect chemoreceptor superfamily. Gustatory receptor (GR) family. Gr21a subfamily. As to expression, expressed in the adult labellar chemosensory neurons. In larvae, is expressed in neurons of the terminal external chemosensory organ, as well as in the dorsal and posterior pharyngeal sense organs.

Its subcellular location is the cell membrane. In terms of biological role, gustatory receptor which mediates acceptance or avoidance behavior, depending on its substrates. Plays a role in sustaining courtship behavior in males, possibly through the reception of a stimulating arrestant pheromone. This chain is Gustatory and pheromone receptor 39a, isoform B (Gr39a), found in Drosophila melanogaster (Fruit fly).